The sequence spans 373 residues: Coiled-coil domain-containing protein 34 (373 aa).

Disordered stretches follow at residues 1–112 (MWAA…SLRG) and 118–137 (CAST…QVRL). Ser-52 is subject to Phosphoserine. Residues 61 to 76 (NSTRSLLSPLGHQSFQ) are compositionally biased toward polar residues. The span at 77 to 101 (FDEDDGDGEDEEDVDDEEDVDEDAH) shows a compositional bias: acidic residues. A coiled-coil region spans residues 152–286 (KEKEERDRLQ…QEWLENAKHK (135 aa)). Positions 324-352 (IHMPPPKEAKDLSGRKSKRPVISQPHKSS) are disordered. Residues 328-337 (PPKEAKDLSG) show a composition bias toward basic and acidic residues.

As to expression, expressed in sperm.

The protein resides in the cell projection. The protein localises to the cilium. It localises to the flagellum. In terms of biological role, involved in spermatogenesis. Has a probable role in anterograde intraflagellar transport which is essential for the formation of sperm flagella. This chain is Coiled-coil domain-containing protein 34 (CCDC34), found in Homo sapiens (Human).